The chain runs to 175 residues: Adenine phosphoribosyltransferase (175 aa).

It belongs to the purine/pyrimidine phosphoribosyltransferase family. As to quaternary structure, homodimer.

Its subcellular location is the cytoplasm. The enzyme catalyses AMP + diphosphate = 5-phospho-alpha-D-ribose 1-diphosphate + adenine. It participates in purine metabolism; AMP biosynthesis via salvage pathway; AMP from adenine: step 1/1. Functionally, catalyzes a salvage reaction resulting in the formation of AMP, that is energically less costly than de novo synthesis. The chain is Adenine phosphoribosyltransferase from Francisella tularensis subsp. tularensis (strain FSC 198).